Here is a 596-residue protein sequence, read N- to C-terminus: MFRPFRSEVEHAVESALQTLALPTDDLGVETPPEDVPATLASSVAFRLARSAKDSPPRVADDIAAAIDLEPDSQTYEYIDHVDTRGPYINFHVNDAYYMDTLTAAQDPGYGHLPNTGQSVVVEHTSANPTGPVHVGRGRNTIFGDAVARLLEYNGDTVDRHYYLNDAGRQVGVFTWAYEKFDADSLPDPERDRPDYDLVRYYRRGNEFLENADADAVESAEDEIASIINGLEAGNTETYERVQTVVDQVIDGMQHSFDRLSAIFDEFIKETRFIQNGDADAVVERLKSADCAVYEDDAWQIDLSAYDIEKNLVFLRSDGTTLYTTRDLAHHEWKFDNYDASVTILGEDHKLQAEQLDATLQILGNDTDQLRQPFYSWVNLPEGGMSTRKGTGVDLDDLLDEAIARAREEVHDRLGSRVRDDSLSSDDIDRIARQVGVGAVRYDIVSKQPTKGITFEWDRALDFEAQSAPYIQYVHARCCGIETEVNSNTDLDIDALTSDSIPDITMLRTDAERALLQEIARFPAVVESAAADLEPHVIATFARSFAEQFNTFYRECSVLNAESEIMTAARVSLVRAARHTVANALDIVGVEAPQSM.

Positions 127–137 (ANPTGPVHVGR) match the 'HIGH' region motif.

The protein belongs to the class-I aminoacyl-tRNA synthetase family.

The protein resides in the cytoplasm. The catalysed reaction is tRNA(Arg) + L-arginine + ATP = L-arginyl-tRNA(Arg) + AMP + diphosphate. The polypeptide is Arginine--tRNA ligase (Haloquadratum walsbyi (strain DSM 16790 / HBSQ001)).